The sequence spans 241 residues: Serine protease 58 (241 aa).

Residues 1-17 (MKFILLWALLNLTVALA) form the signal peptide. One can recognise a Peptidase S1 domain in the interval 18-239 (FNPDYTVSST…YIPWIENVIQ (222 aa)). Cysteines 41 and 57 form a disulfide. Active-site charge relay system residues include His-56 and Asp-101. Cystine bridges form between Cys-133–Cys-201, Cys-165–Cys-180, and Cys-191–Cys-215. N-linked (GlcNAc...) asparagine glycosylation is found at Asn-156 and Asn-173. Ser-195 acts as the Charge relay system in catalysis.

It belongs to the peptidase S1 family.

It is found in the secreted. It catalyses the reaction Preferential cleavage: Arg-|-Xaa, Lys-|-Xaa.. The polypeptide is Serine protease 58 (PRSS58) (Homo sapiens (Human)).